The sequence spans 101 residues: Small ribosomal subunit protein uS14 (101 aa).

The segment at 48 to 69 is disordered; the sequence is LSKLPRDSSPSRHRSRCELSGR. Basic and acidic residues predominate over residues 51–68; it reads LPRDSSPSRHRSRCELSG.

The protein belongs to the universal ribosomal protein uS14 family. Part of the 30S ribosomal subunit. Contacts proteins S3 and S10.

Functionally, binds 16S rRNA, required for the assembly of 30S particles and may also be responsible for determining the conformation of the 16S rRNA at the A site. This is Small ribosomal subunit protein uS14 from Stenotrophomonas maltophilia (strain R551-3).